The sequence spans 379 residues: NADH-rubredoxin oxidoreductase (379 aa).

2 disulfide bridges follow: Cys-26–Cys-286 and Cys-137–Cys-216. Residues 33–35 (NSE), Arg-42, Ala-79, and Tyr-125 contribute to the FAD site. Position 259 (Asp-259) interacts with FAD.

Belongs to the FAD-dependent oxidoreductase family. Monomer. Requires FAD as cofactor.

The enzyme catalyses 2 reduced [rubredoxin] + NAD(+) + H(+) = 2 oxidized [rubredoxin] + NADH. In terms of biological role, catalyzes the NADH-dependent reduction of rubredoxin (Rd). NADPH is a very poor electron donor compared to NADH. Functions as an intermediate component in the electron transfer chain: NADH-&gt;NROR-&gt;Rd-&gt;FprA1/2. Also functions as an intermediate component in the electron transfer chains from NADH to revRbr and Dfx. Therefore, is a key electron carrier in an efficient multienzyme complex that can scavenge O(2) and reactive oxygen species (ROS), and thus plays an important role in the oxidative stress defense system in C.acetobutylicum, an obligate anaerobic bacterium. This is NADH-rubredoxin oxidoreductase (nroR) from Clostridium acetobutylicum (strain ATCC 824 / DSM 792 / JCM 1419 / IAM 19013 / LMG 5710 / NBRC 13948 / NRRL B-527 / VKM B-1787 / 2291 / W).